The sequence spans 355 residues: Methylthioribose-1-phosphate isomerase (355 aa).

Substrate is bound by residues 50–52, Arg-93, and Gln-198; that span reads RGA. The active-site Proton donor is Asp-239. Position 249-250 (249-250) interacts with substrate; sequence NK.

Belongs to the eIF-2B alpha/beta/delta subunits family. MtnA subfamily. As to quaternary structure, homodimer.

The catalysed reaction is 5-(methylsulfanyl)-alpha-D-ribose 1-phosphate = 5-(methylsulfanyl)-D-ribulose 1-phosphate. It functions in the pathway amino-acid biosynthesis; L-methionine biosynthesis via salvage pathway; L-methionine from S-methyl-5-thio-alpha-D-ribose 1-phosphate: step 1/6. Catalyzes the interconversion of methylthioribose-1-phosphate (MTR-1-P) into methylthioribulose-1-phosphate (MTRu-1-P). The chain is Methylthioribose-1-phosphate isomerase from Geobacillus kaustophilus (strain HTA426).